Consider the following 82-residue polypeptide: Sulfur carrier protein TusA (82 aa).

The Cysteine persulfide intermediate role is filled by C20.

It belongs to the sulfur carrier protein TusA family.

The protein resides in the cytoplasm. Functionally, sulfur carrier protein which probably makes part of a sulfur-relay system. This Aeromonas hydrophila subsp. hydrophila (strain ATCC 7966 / DSM 30187 / BCRC 13018 / CCUG 14551 / JCM 1027 / KCTC 2358 / NCIMB 9240 / NCTC 8049) protein is Sulfur carrier protein TusA.